The chain runs to 520 residues: Hydroxymethylglutaryl-CoA synthase, cytoplasmic (520 aa).

At Ser-4 the chain carries Phosphoserine. Residues Asp-43 and Ala-44 each coordinate (3S)-3-hydroxy-3-methylglutaryl-CoA. 44 to 46 (AGK) lines the CoA pocket. An N6-acetyllysine modification is found at Lys-46. Glu-95 functions as the Proton donor/acceptor in the catalytic mechanism. Positions 129, 167, 171, 221, and 264 each coordinate (3S)-3-hydroxy-3-methylglutaryl-CoA. Catalysis depends on Cys-129, which acts as the Acyl-thioester intermediate. A CoA-binding site is contributed by Asn-167. Residue Ser-221 participates in CoA binding. The Proton donor/acceptor role is filled by His-264. Lys-269 and Lys-273 together coordinate CoA. Positions 273, 343, and 377 each coordinate (3S)-3-hydroxy-3-methylglutaryl-CoA. Lys-273 is subject to N6-acetyllysine. The segment at 487-520 (NTATEHIPSPAKKVPRLPATSGEPESAVISNGEH) is disordered. Phosphoserine occurs at positions 495 and 516.

The protein belongs to the thiolase-like superfamily. HMG-CoA synthase family. In terms of assembly, homodimer.

Its subcellular location is the cytoplasm. It catalyses the reaction acetoacetyl-CoA + acetyl-CoA + H2O = (3S)-3-hydroxy-3-methylglutaryl-CoA + CoA + H(+). It functions in the pathway metabolic intermediate biosynthesis; (R)-mevalonate biosynthesis; (R)-mevalonate from acetyl-CoA: step 2/3. Catalyzes the condensation of acetyl-CoA with acetoacetyl-CoA to form HMG-CoA, which is converted by HMG-CoA reductase (HMGCR) into mevalonate, a precursor for cholesterol synthesis. The chain is Hydroxymethylglutaryl-CoA synthase, cytoplasmic from Rattus norvegicus (Rat).